Consider the following 93-residue polypeptide: Cobalt transport protein CbiN (93 aa).

The next 2 helical transmembrane spans lie at 5-25 (LMLLVMVVALVILPFFINHGG) and 63-83 (LLFTLQGSLGAAVIFYILGYC).

This sequence belongs to the CbiN family. In terms of assembly, forms an energy-coupling factor (ECF) transporter complex composed of an ATP-binding protein (A component, CbiO), a transmembrane protein (T component, CbiQ) and 2 possible substrate-capture proteins (S components, CbiM and CbiN) of unknown stoichimetry.

The protein localises to the cell inner membrane. It participates in cofactor biosynthesis; adenosylcobalamin biosynthesis. Part of the energy-coupling factor (ECF) transporter complex CbiMNOQ involved in cobalt import. The sequence is that of Cobalt transport protein CbiN from Salmonella paratyphi B (strain ATCC BAA-1250 / SPB7).